Here is a 269-residue protein sequence, read N- to C-terminus: 4-hydroxy-tetrahydrodipicolinate reductase (269 aa).

11 to 16 contacts NAD(+); the sequence is GPIGRM. Lys39 is a binding site for NADP(+). NAD(+) is bound by residues 101 to 103 and 125 to 128; these read GTT and ASNF. His158 (proton donor/acceptor) is an active-site residue. His159 is a (S)-2,3,4,5-tetrahydrodipicolinate binding site. Lys162 serves as the catalytic Proton donor. 168-169 is a (S)-2,3,4,5-tetrahydrodipicolinate binding site; that stretch reads GT.

Belongs to the DapB family. As to quaternary structure, homotetramer.

It is found in the cytoplasm. It catalyses the reaction (S)-2,3,4,5-tetrahydrodipicolinate + NAD(+) + H2O = (2S,4S)-4-hydroxy-2,3,4,5-tetrahydrodipicolinate + NADH + H(+). The catalysed reaction is (S)-2,3,4,5-tetrahydrodipicolinate + NADP(+) + H2O = (2S,4S)-4-hydroxy-2,3,4,5-tetrahydrodipicolinate + NADPH + H(+). It functions in the pathway amino-acid biosynthesis; L-lysine biosynthesis via DAP pathway; (S)-tetrahydrodipicolinate from L-aspartate: step 4/4. Catalyzes the conversion of 4-hydroxy-tetrahydrodipicolinate (HTPA) to tetrahydrodipicolinate. The chain is 4-hydroxy-tetrahydrodipicolinate reductase from Buchnera aphidicola subsp. Acyrthosiphon pisum (strain APS) (Acyrthosiphon pisum symbiotic bacterium).